The following is a 107-amino-acid chain: Rhodocoxin (107 aa).

One can recognise a 2Fe-2S ferredoxin-type domain in the interval 2 to 106 (PTVTYVHPDG…GLIVRLPEEQ (105 aa)). [2Fe-2S] cluster-binding residues include Cys-40, Cys-46, Cys-49, and Cys-87.

Belongs to the adrenodoxin/putidaredoxin family. [2Fe-2S] cluster serves as cofactor.

Functionally, ferredoxin-type protein which transfers electrons from rhodocoxin reductase to cytochrome CYP116 (ThcB), which is involved in the degradation of thiocarbamate herbicides. This chain is Rhodocoxin (thcC), found in Rhodococcus erythropolis (Arthrobacter picolinophilus).